A 196-amino-acid chain; its full sequence is MAIDVKAIEEHIRGILIALGDDPEREGLKNTPKRVAKMYEEVFKGMCYSNDEIAEMFNVTFEDDLCINDNENDMVFMKEIEIFSHCEHHLALMYNMKVAIAYIPKKKIIGLSKIARIADMVGRRLQLQERIGSDIAEILQKITGSEDVAVIIEGEHGCMTTRGIKKPGTKTITTTLRGRFNTDPIVSNKLMMLYTK.

Residues C86, H89, and C158 each coordinate Zn(2+).

This sequence belongs to the GTP cyclohydrolase I family. In terms of assembly, homomer.

The catalysed reaction is GTP + H2O = 7,8-dihydroneopterin 3'-triphosphate + formate + H(+). Its pathway is cofactor biosynthesis; 7,8-dihydroneopterin triphosphate biosynthesis; 7,8-dihydroneopterin triphosphate from GTP: step 1/1. The chain is GTP cyclohydrolase 1 from Clostridium botulinum (strain Kyoto / Type A2).